The chain runs to 366 residues: Zinc-regulated GTPase metalloprotein activator 1 (366 aa).

The psi-PxLVp motif motif lies at 5-12 (DECPELVP). 31-38 (GYLGAGKT) is a binding site for GTP. The Zn(2+) site is built by Cys-89, Cys-91, and Cys-92. A CXCC motif motif is present at residues 89 to 92 (CLCC). Residues 92 to 96 (CSVKD) and 185 to 188 (NKTD) contribute to the GTP site. Residues 258-357 (TITFEVPGSV…GEILKKEFIS (100 aa)) enclose the CobW C-terminal domain.

The protein belongs to the SIMIBI class G3E GTPase family. ZNG1 subfamily.

Its subcellular location is the nucleus. The catalysed reaction is GTP + H2O = GDP + phosphate + H(+). Functionally, zinc chaperone that directly transfers zinc cofactor to target metalloproteins, thereby activating them. Catalyzes zinc insertion into the active site of methionine aminopeptidase METAP1, which function to cleave the initiator methionine from polypeptides during or after protein translation. Mechanistically, the N-terminal psi-PxLVp motif binds to the C6H2-type zinc finger of inactive form of METAP1. After formation of the docked complex, zinc is transferred from the CXCC motif in the GTPase domain of ZNG1 to the zinc binding site in the peptidase domain of METAP1 in a process requiring GTP hydrolysis. GTP/GDP exchange is required for release of active METAP1. The protein is Zinc-regulated GTPase metalloprotein activator 1 of Danio rerio (Zebrafish).